The following is an 81-amino-acid chain: Conotoxin Cl9.6 (81 aa).

Positions 1 to 20 (MSTLGMTLLILLLLLPLATP) are cleaved as a signal peptide. Residues 21–40 (DDVGQPPKRDTLRNLLKIGT) constitute a propeptide that is removed on maturation. Cystine bridges form between C46/C69, C54/C76, and C60/C78.

Expressed by the venom duct.

The protein resides in the secreted. The polypeptide is Conotoxin Cl9.6 (Californiconus californicus (California cone)).